Reading from the N-terminus, the 305-residue chain is MAQNHVIKVSKKTLAEMTTVYQPNRLNKTVPYTVFVAKVGTTTITAYQSGKVMFQGPQAEKEAARWEGTSTTPKKKVSPQTTTLPADFGNWSVIGSDEVGNGSYFGPVTVCAAYVDKSMISKLKSLGVRDSKELTDPQIIQLSHVIKELIPYKLLIVEPKKYNEIQPNYNAVHMKVALHNQAIYLLLQELAPTKPEGILIDQFTPENNYRKYVRNEKNQVTEKLFFVTKGEQYHVAVAAASIISRAAFLEELDKESAELGFSVPSGAGSKSDQVAARILKKGGLDLLANYAKLHFANTQKAQKLL.

In terms of domain architecture, RNase H type-2 spans 91-305 (WSVIGSDEVG…ANTQKAQKLL (215 aa)). Residues aspartate 97, glutamate 98, and aspartate 201 each coordinate a divalent metal cation.

It belongs to the RNase HII family. RnhC subfamily. Mn(2+) serves as cofactor. Mg(2+) is required as a cofactor.

Its subcellular location is the cytoplasm. It carries out the reaction Endonucleolytic cleavage to 5'-phosphomonoester.. Endonuclease that specifically degrades the RNA of RNA-DNA hybrids. This Enterococcus faecalis (strain ATCC 700802 / V583) protein is Ribonuclease HIII.